Here is a 127-residue protein sequence, read N- to C-terminus: uncharacterized protein (127 aa).

The next 4 membrane-spanning stretches (helical) occupy residues 1 to 21, 32 to 52, 68 to 88, and 100 to 120; these read MYII…YILV, TVAA…LYVF, AFFS…IILV, and ILDN…LVFK.

The protein belongs to the GtrA family.

It localises to the cell membrane. This is an uncharacterized protein from Bacillus subtilis (strain 168).